Consider the following 539-residue polypeptide: Chaperonin GroEL 2 (539 aa).

ATP-binding positions include 29-32, 86-90, glycine 413, 477-479, and aspartate 493; these read TLGP, DGTTT, and NAA. Positions 519-539 are disordered; the sequence is VVDKPEEEDSAAAGHGHGHSH.

This sequence belongs to the chaperonin (HSP60) family. Forms a cylinder of 14 subunits composed of two heptameric rings stacked back-to-back. Interacts with the co-chaperonin GroES.

The protein localises to the cytoplasm. The enzyme catalyses ATP + H2O + a folded polypeptide = ADP + phosphate + an unfolded polypeptide.. In terms of biological role, together with its co-chaperonin GroES, plays an essential role in assisting protein folding. The GroEL-GroES system forms a nano-cage that allows encapsulation of the non-native substrate proteins and provides a physical environment optimized to promote and accelerate protein folding. The polypeptide is Chaperonin GroEL 2 (Saccharopolyspora erythraea (strain ATCC 11635 / DSM 40517 / JCM 4748 / NBRC 13426 / NCIMB 8594 / NRRL 2338)).